Here is a 480-residue protein sequence, read N- to C-terminus: Probable serine/threonine-protein phosphatase 2A regulatory subunit B'' subunit TON2 (480 aa).

3 consecutive EF-hand domains span residues 186–221 (VSLT…LIPN), 294–329 (TSAQ…TLTE), and 369–404 (DTPE…VHQK). Ca(2+) contacts are provided by D307, D309, S311, S313, and E318.

As to quaternary structure, interacts with PP2AA1. In terms of tissue distribution, widely expressed.

The protein resides in the cytoplasm. Its subcellular location is the cytoskeleton. Probable regulatory subunit of type 2A protein phosphatase involved in the control of the dynamic organization of the cortical cytoskeleton. Plays an important role in the organization of interphase microtubule arrays in part through the regulation of nucleation geometry. Required for the reorganization of cortical arrays in response to light. This is Probable serine/threonine-protein phosphatase 2A regulatory subunit B'' subunit TON2 (TON2) from Arabidopsis thaliana (Mouse-ear cress).